The following is a 325-amino-acid chain: Elongation factor P--(R)-beta-lysine ligase (325 aa).

76 to 78 (SPE) serves as a coordination point for substrate. Residues 100–102 (RNE) and asparagine 109 contribute to the ATP site. Tyrosine 118 is a binding site for substrate. ATP is bound at residue 244 to 245 (EL). A substrate-binding site is contributed by glutamate 251. Glycine 300 is an ATP binding site.

This sequence belongs to the class-II aminoacyl-tRNA synthetase family. EpmA subfamily. Homodimer.

It carries out the reaction D-beta-lysine + L-lysyl-[protein] + ATP = N(6)-((3R)-3,6-diaminohexanoyl)-L-lysyl-[protein] + AMP + diphosphate + H(+). Functionally, with EpmB is involved in the beta-lysylation step of the post-translational modification of translation elongation factor P (EF-P) on 'Lys-34'. Catalyzes the ATP-dependent activation of (R)-beta-lysine produced by EpmB, forming a lysyl-adenylate, from which the beta-lysyl moiety is then transferred to the epsilon-amino group of EF-P 'Lys-34'. The polypeptide is Elongation factor P--(R)-beta-lysine ligase (Salmonella typhi).